Here is a 575-residue protein sequence, read N- to C-terminus: Septation ring formation regulator EzrA (575 aa).

Residues 1-8 (MSNGQLIY) lie on the Extracellular side of the membrane. The helical transmembrane segment at 9 to 27 (LMVAIAVILVLAYVVAIFL) threads the bilayer. The Cytoplasmic segment spans residues 28-575 (RKRNEGRLEA…YEKTRETIRF (548 aa)). Coiled coils occupy residues 105 to 191 (LKAS…FVTL), 265 to 301 (LYEA…LYDI), 354 to 416 (VRRI…IEKD), and 456 to 526 (TASN…IQEA).

It belongs to the EzrA family.

The protein resides in the cell membrane. Negative regulator of FtsZ ring formation; modulates the frequency and position of FtsZ ring formation. Inhibits FtsZ ring formation at polar sites. Interacts either with FtsZ or with one of its binding partners to promote depolymerization. The polypeptide is Septation ring formation regulator EzrA (Streptococcus pneumoniae (strain ATCC BAA-255 / R6)).